The chain runs to 49 residues: Large ribosomal subunit protein bL33B (49 aa).

The protein belongs to the bacterial ribosomal protein bL33 family.

The sequence is that of Large ribosomal subunit protein bL33B from Acholeplasma laidlawii (strain PG-8A).